The primary structure comprises 715 residues: Fatty acid oxidation complex subunit alpha (715 aa).

Positions 1-190 (MIYEGKAITV…KVGAVDAVVA (190 aa)) are enoyl-CoA hydratase/isomerase. Residue Asp297 coordinates substrate. Positions 312 to 715 (HDVKQAAVLG…MAKNGQRFFN (404 aa)) are 3-hydroxyacyl-CoA dehydrogenase. Residues Met325, Asp344, 401-403 (VVE), Lys408, and Ser430 contribute to the NAD(+) site. His451 functions as the For 3-hydroxyacyl-CoA dehydrogenase activity in the catalytic mechanism. Residue Asn454 participates in NAD(+) binding. Residues Asn501 and Tyr660 each contribute to the substrate site.

In the N-terminal section; belongs to the enoyl-CoA hydratase/isomerase family. The protein in the C-terminal section; belongs to the 3-hydroxyacyl-CoA dehydrogenase family. In terms of assembly, heterotetramer of two alpha chains (FadB) and two beta chains (FadA).

It carries out the reaction a (3S)-3-hydroxyacyl-CoA + NAD(+) = a 3-oxoacyl-CoA + NADH + H(+). The catalysed reaction is a (3S)-3-hydroxyacyl-CoA = a (2E)-enoyl-CoA + H2O. It catalyses the reaction a 4-saturated-(3S)-3-hydroxyacyl-CoA = a (3E)-enoyl-CoA + H2O. The enzyme catalyses (3S)-3-hydroxybutanoyl-CoA = (3R)-3-hydroxybutanoyl-CoA. It carries out the reaction a (3Z)-enoyl-CoA = a 4-saturated (2E)-enoyl-CoA. The catalysed reaction is a (3E)-enoyl-CoA = a 4-saturated (2E)-enoyl-CoA. Its pathway is lipid metabolism; fatty acid beta-oxidation. In terms of biological role, involved in the aerobic and anaerobic degradation of long-chain fatty acids via beta-oxidation cycle. Catalyzes the formation of 3-oxoacyl-CoA from enoyl-CoA via L-3-hydroxyacyl-CoA. It can also use D-3-hydroxyacyl-CoA and cis-3-enoyl-CoA as substrate. In Pseudomonas putida (strain ATCC 700007 / DSM 6899 / JCM 31910 / BCRC 17059 / LMG 24140 / F1), this protein is Fatty acid oxidation complex subunit alpha.